Here is a 91-residue protein sequence, read N- to C-terminus: Conotoxin Im9.1 (91 aa).

An N-terminal signal peptide occupies residues 1-23; that stretch reads MSKVGVVPLIFLVLLSIAALQNG. Residues 24–55 constitute a propeptide that is removed on maturation; sequence DDPRRQRDEKQSPQGDILRSTLTKYSYNIQRR. Cystine bridges form between Cys-56–Cys-72, Cys-63–Cys-83, and Cys-66–Cys-86.

It belongs to the conotoxin M superfamily. Expressed by the venom duct.

Its subcellular location is the secreted. Its function is as follows. Probable neurotoxin. This is Conotoxin Im9.1 from Conus imperialis (Imperial cone).